A 609-amino-acid chain; its full sequence is Elongation factor 4 (609 aa).

A tr-type G domain is found at 5-187; the sequence is SKIRNFSIIA…AIVAKIPPPE (183 aa). GTP-binding positions include 17–22 and 134–137; these read DHGKST and NKID.

This sequence belongs to the TRAFAC class translation factor GTPase superfamily. Classic translation factor GTPase family. LepA subfamily.

The protein localises to the cell inner membrane. The enzyme catalyses GTP + H2O = GDP + phosphate + H(+). Its function is as follows. Required for accurate and efficient protein synthesis under certain stress conditions. May act as a fidelity factor of the translation reaction, by catalyzing a one-codon backward translocation of tRNAs on improperly translocated ribosomes. Back-translocation proceeds from a post-translocation (POST) complex to a pre-translocation (PRE) complex, thus giving elongation factor G a second chance to translocate the tRNAs correctly. Binds to ribosomes in a GTP-dependent manner. The chain is Elongation factor 4 from Erythrobacter litoralis (strain HTCC2594).